The sequence spans 131 residues: Glycine cleavage system H protein (131 aa).

The 83-residue stretch at 24–106 (TLRVGITDYA…YGEGWLVDLQ (83 aa)) folds into the Lipoyl-binding domain. Lys-65 carries the N6-lipoyllysine modification.

The protein belongs to the GcvH family. As to quaternary structure, the glycine cleavage system is composed of four proteins: P, T, L and H. The cofactor is (R)-lipoate.

Its function is as follows. The glycine cleavage system catalyzes the degradation of glycine. The H protein shuttles the methylamine group of glycine from the P protein to the T protein. This is Glycine cleavage system H protein from Mycobacterium sp. (strain JLS).